The following is an 835-amino-acid chain: Lon protease (835 aa).

Positions V36–L234 constitute a Lon N-terminal domain. G387–T394 contributes to the ATP binding site. The 183-residue stretch at R646 to N828 folds into the Lon proteolytic domain. Active-site residues include S734 and K777.

The protein belongs to the peptidase S16 family. In terms of assembly, homohexamer. Organized in a ring with a central cavity.

The protein resides in the cytoplasm. The catalysed reaction is Hydrolysis of proteins in presence of ATP.. In terms of biological role, ATP-dependent serine protease that mediates the selective degradation of mutant and abnormal proteins as well as certain short-lived regulatory proteins. Required for cellular homeostasis and for survival from DNA damage and developmental changes induced by stress. Degrades polypeptides processively to yield small peptide fragments that are 5 to 10 amino acids long. Binds to DNA in a double-stranded, site-specific manner. The protein is Lon protease of Protochlamydia amoebophila (strain UWE25).